Consider the following 525-residue polypeptide: GMP synthase [glutamine-hydrolyzing] (525 aa).

A Glutamine amidotransferase type-1 domain is found at 9–207 (RILILDFGSQ…VRDICQCEAL (199 aa)). Cys86 (nucleophile) is an active-site residue. Catalysis depends on residues His181 and Glu183. Residues 208 to 400 (WTPAKIIDDA…LGLPYDMLYR (193 aa)) enclose the GMPS ATP-PPase domain. Position 235 to 241 (235 to 241 (SGGVDSS)) interacts with ATP.

In terms of assembly, homodimer.

It catalyses the reaction XMP + L-glutamine + ATP + H2O = GMP + L-glutamate + AMP + diphosphate + 2 H(+). It participates in purine metabolism; GMP biosynthesis; GMP from XMP (L-Gln route): step 1/1. Functionally, catalyzes the synthesis of GMP from XMP. The protein is GMP synthase [glutamine-hydrolyzing] of Shigella boydii serotype 4 (strain Sb227).